Consider the following 692-residue polypeptide: Enzymatic polyprotein (692 aa).

Aspartate 36 serves as the catalytic For protease activity. Residues 227–411 (LKKGLIRESQ…QEIEYLGLKI (185 aa)) enclose the Reverse transcriptase domain.

This sequence belongs to the caulimoviridae enzymatic polyprotein family.

The enzyme catalyses DNA(n) + a 2'-deoxyribonucleoside 5'-triphosphate = DNA(n+1) + diphosphate. Functionally, encodes for at least two polypeptides: protease (PR) and reverse transcriptase (RT). The protease processes the polyprotein in cis. Reverse transcriptase is multifunctional enzyme that converts the viral RNA genome into dsDNA in viral cytoplasmic capsids. This enzyme displays a DNA polymerase activity that can copy either DNA or RNA templates, and a ribonuclease H (RNase H) activity that cleaves the RNA strand of RNA-DNA heteroduplexes in a partially processive 3'- to 5'-endonucleasic mode. Neo-synthesized pregenomic RNA (pgRNA) are encapsidated, and reverse-transcribed inside the nucleocapsid. Partial (+)DNA is synthesized from the (-)DNA template and generates the relaxed circular DNA (RC-DNA) genome. After budding and infection, the RC-DNA migrates in the nucleus, and is converted into a plasmid-like covalently closed circular DNA (cccDNA). This Soybean chlorotic mottle virus protein is Enzymatic polyprotein.